Here is a 128-residue protein sequence, read N- to C-terminus: Large ribosomal subunit protein bL12 (128 aa).

Belongs to the bacterial ribosomal protein bL12 family. Homodimer. Part of the ribosomal stalk of the 50S ribosomal subunit. Forms a multimeric L10(L12)X complex, where L10 forms an elongated spine to which 2 to 4 L12 dimers bind in a sequential fashion. Binds GTP-bound translation factors.

Functionally, forms part of the ribosomal stalk which helps the ribosome interact with GTP-bound translation factors. Is thus essential for accurate translation. This Halorhodospira halophila (strain DSM 244 / SL1) (Ectothiorhodospira halophila (strain DSM 244 / SL1)) protein is Large ribosomal subunit protein bL12.